Reading from the N-terminus, the 38-residue chain is Phospholipase A2 1 (38 aa).

Ca(2+) is bound by residues Y28, G30, and G32.

The protein belongs to the phospholipase A2 family. Group I subfamily. Requires Ca(2+) as cofactor. In terms of tissue distribution, expressed by the venom gland.

Its subcellular location is the secreted. The enzyme catalyses a 1,2-diacyl-sn-glycero-3-phosphocholine + H2O = a 1-acyl-sn-glycero-3-phosphocholine + a fatty acid + H(+). In terms of biological role, snake venom phospholipase A2 (PLA2) that inhibits neuromuscular transmission by blocking acetylcholine release from the nerve termini. PLA2 catalyzes the calcium-dependent hydrolysis of the 2-acyl groups in 3-sn-phosphoglycerides. In Calliophis bivirgatus (Blue Malaysian coral snake), this protein is Phospholipase A2 1.